A 227-amino-acid polypeptide reads, in one-letter code: Phosphoribosylformylglycinamidine synthase subunit PurQ (227 aa).

One can recognise a Glutamine amidotransferase type-1 domain in the interval 2–227 (RWAIVRFPGA…FLGLVREVAR (226 aa)). C85 serves as the catalytic Nucleophile. Catalysis depends on residues H200 and E202.

In terms of assembly, part of the FGAM synthase complex composed of 1 PurL, 1 PurQ and 2 PurS subunits.

The protein resides in the cytoplasm. It carries out the reaction N(2)-formyl-N(1)-(5-phospho-beta-D-ribosyl)glycinamide + L-glutamine + ATP + H2O = 2-formamido-N(1)-(5-O-phospho-beta-D-ribosyl)acetamidine + L-glutamate + ADP + phosphate + H(+). The enzyme catalyses L-glutamine + H2O = L-glutamate + NH4(+). It functions in the pathway purine metabolism; IMP biosynthesis via de novo pathway; 5-amino-1-(5-phospho-D-ribosyl)imidazole from N(2)-formyl-N(1)-(5-phospho-D-ribosyl)glycinamide: step 1/2. Functionally, part of the phosphoribosylformylglycinamidine synthase complex involved in the purines biosynthetic pathway. Catalyzes the ATP-dependent conversion of formylglycinamide ribonucleotide (FGAR) and glutamine to yield formylglycinamidine ribonucleotide (FGAM) and glutamate. The FGAM synthase complex is composed of three subunits. PurQ produces an ammonia molecule by converting glutamine to glutamate. PurL transfers the ammonia molecule to FGAR to form FGAM in an ATP-dependent manner. PurS interacts with PurQ and PurL and is thought to assist in the transfer of the ammonia molecule from PurQ to PurL. This is Phosphoribosylformylglycinamidine synthase subunit PurQ from Thermus thermophilus (strain ATCC BAA-163 / DSM 7039 / HB27).